Here is a 185-residue protein sequence, read N- to C-terminus: Intraflagellar transport protein 22 homolog (185 aa).

GTP contacts are provided by residues 10-17, 63-67, and 123-126; these read GPCESGKT, DCGGD, and HKPG. At serine 137 the chain carries Phosphoserine.

It belongs to the small GTPase superfamily. Rab family. Component of the IFT complex B, at least composed of IFT20, IFT22, IFT25, IFT27, IFT46, IFT52, TRAF3IP1/IFT54, IFT57, IFT74, IFT80, IFT81, and IFT88. Interacts with IFT88. Interacts with CFAP61.

Its subcellular location is the cell projection. The protein resides in the cilium. Functionally, small GTPase-like component of the intraflagellar transport (IFT) complex B. The sequence is that of Intraflagellar transport protein 22 homolog (Ift22) from Mus musculus (Mouse).